The chain runs to 186 residues: Ribosome-recycling factor (186 aa).

The protein belongs to the RRF family.

Its subcellular location is the cytoplasm. Its function is as follows. Responsible for the release of ribosomes from messenger RNA at the termination of protein biosynthesis. May increase the efficiency of translation by recycling ribosomes from one round of translation to another. The sequence is that of Ribosome-recycling factor from Porphyromonas gingivalis (strain ATCC BAA-308 / W83).